A 349-amino-acid polypeptide reads, in one-letter code: Protein RecA (349 aa).

Residue Gly69–Thr76 coordinates ATP.

This sequence belongs to the RecA family.

It is found in the cytoplasm. In terms of biological role, can catalyze the hydrolysis of ATP in the presence of single-stranded DNA, the ATP-dependent uptake of single-stranded DNA by duplex DNA, and the ATP-dependent hybridization of homologous single-stranded DNAs. It interacts with LexA causing its activation and leading to its autocatalytic cleavage. This is Protein RecA from Rippkaea orientalis (strain PCC 8801 / RF-1) (Cyanothece sp. (strain PCC 8801)).